The primary structure comprises 427 residues: Septin-8 (427 aa).

The 267-residue stretch at 39 to 305 (QGFCFNILCV…ELYRRCKLEE (267 aa)) folds into the Septin-type G domain. The interval 49 to 56 (GETGIGKS) is G1 motif. Residues 49–56 (GETGIGKS), glycine 104, 185–193 (KADTISKSE), glycine 239, and arginine 254 contribute to the GTP site. The tract at residues 101-104 (DTVG) is G3 motif. The interval 184–187 (AKAD) is G4 motif. Residues 321-409 (QETYEAKRKE…KAAMEALQSQ (89 aa)) adopt a coiled-coil conformation. Residues 373 to 427 (RVHQEESKKVEDKRRDLEEEMNSFNRRKAAMEALQSQSFQATSQQPLKKDKDRKN) form a disordered region. Residues 374 to 389 (VHQEESKKVEDKRRDL) show a composition bias toward basic and acidic residues. Polar residues predominate over residues 406 to 418 (LQSQSFQATSQQP).

The protein belongs to the TRAFAC class TrmE-Era-EngA-EngB-Septin-like GTPase superfamily. Septin GTPase family.

It is found in the cytoplasm. Its subcellular location is the cytoskeleton. It localises to the synapse. The protein resides in the cell projection. The protein localises to the axon. It is found in the cytoplasmic vesicle. Its subcellular location is the secretory vesicle. It localises to the synaptic vesicle membrane. The protein resides in the presynapse. This Xenopus tropicalis (Western clawed frog) protein is Septin-8.